The following is a 346-amino-acid chain: Mannonate dehydratase (346 aa).

It belongs to the mannonate dehydratase family. Requires Fe(2+) as cofactor. Mn(2+) is required as a cofactor.

It catalyses the reaction D-mannonate = 2-dehydro-3-deoxy-D-gluconate + H2O. Its pathway is carbohydrate metabolism; pentose and glucuronate interconversion. Catalyzes the dehydration of D-mannonate. In Cupriavidus taiwanensis (strain DSM 17343 / BCRC 17206 / CCUG 44338 / CIP 107171 / LMG 19424 / R1) (Ralstonia taiwanensis (strain LMG 19424)), this protein is Mannonate dehydratase.